A 325-amino-acid chain; its full sequence is MTFAKITQAAHYVPENVVSNDDLSKIMDTNDEWIYSRTGIKNRHISTGENTSDLATKVAKQLIENSGVDPELIDFIIVATVTPDSMMPSTAARVQAQVGATNAFAYDLTAACSGFVFALSTAEKLISSGAYQRGIVIGAEVFSKVIDWSDRSTAVLFGDGAAGVLLDNSGSQPLIIAEKMQTDGKRGGSLLSSYADIQTPFASVSYEGSNLSMEGRAIFDFAVRDVPKNIQATLEKSDLAAEEIDYYLLHQANSRILDKMAKKLGVTRNKFLQNMQEYGNTSAASIPILLSESVKNGIFSLDGQTKVVLTGFGGGLTWGTAIINL.

Active-site residues include C112 and H250. The ACP-binding stretch occupies residues Q251–R255. N280 is an active-site residue.

This sequence belongs to the thiolase-like superfamily. FabH family. In terms of assembly, homodimer.

The protein resides in the cytoplasm. The catalysed reaction is malonyl-[ACP] + acetyl-CoA + H(+) = 3-oxobutanoyl-[ACP] + CO2 + CoA. Its pathway is lipid metabolism; fatty acid biosynthesis. Catalyzes the condensation reaction of fatty acid synthesis by the addition to an acyl acceptor of two carbons from malonyl-ACP. Catalyzes the first condensation reaction which initiates fatty acid synthesis and may therefore play a role in governing the total rate of fatty acid production. Possesses both acetoacetyl-ACP synthase and acetyl transacylase activities. Its substrate specificity determines the biosynthesis of branched-chain and/or straight-chain of fatty acids. This is Beta-ketoacyl-[acyl-carrier-protein] synthase III from Lactococcus lactis subsp. cremoris (strain SK11).